Here is a 405-residue protein sequence, read N- to C-terminus: 2,3-diketo-5-methylthiopentyl-1-phosphate enolase (405 aa).

Lysine 91 serves as the catalytic Proton acceptor. Substrate contacts are provided by residues lysine 140, 166-169 (KDDE), histidine 257, glycine 329, and 351-352 (GG). Mg(2+) contacts are provided by lysine 166, aspartate 168, and glutamate 169. Lysine 166 carries the post-translational modification N6-carboxylysine.

This sequence belongs to the RuBisCO large chain family. Type IV subfamily. As to quaternary structure, homodimer. Mg(2+) is required as a cofactor.

The catalysed reaction is 5-methylsulfanyl-2,3-dioxopentyl phosphate = 2-hydroxy-5-methylsulfanyl-3-oxopent-1-enyl phosphate. The protein operates within amino-acid biosynthesis; L-methionine biosynthesis via salvage pathway; L-methionine from S-methyl-5-thio-alpha-D-ribose 1-phosphate: step 3/6. Functionally, catalyzes the enolization of 2,3-diketo-5-methylthiopentyl-1-phosphate (DK-MTP-1-P) into 2-hydroxy-3-keto-5-methylthiopentenyl-1-phosphate (HK-MTPenyl-1-P). The sequence is that of 2,3-diketo-5-methylthiopentyl-1-phosphate enolase from Bacillus licheniformis (strain ATCC 14580 / DSM 13 / JCM 2505 / CCUG 7422 / NBRC 12200 / NCIMB 9375 / NCTC 10341 / NRRL NRS-1264 / Gibson 46).